The sequence spans 210 residues: Large ribosomal subunit protein uL4 (210 aa).

The disordered stretch occupies residues Q46–I89. Residues G60–G71 show a composition bias toward basic residues.

It belongs to the universal ribosomal protein uL4 family. As to quaternary structure, part of the 50S ribosomal subunit.

Functionally, one of the primary rRNA binding proteins, this protein initially binds near the 5'-end of the 23S rRNA. It is important during the early stages of 50S assembly. It makes multiple contacts with different domains of the 23S rRNA in the assembled 50S subunit and ribosome. Forms part of the polypeptide exit tunnel. In Prochlorococcus marinus (strain MIT 9312), this protein is Large ribosomal subunit protein uL4.